A 167-amino-acid polypeptide reads, in one-letter code: Iron-sulfur cluster assembly enzyme ISCU (167 aa).

The transit peptide at methionine 1–leucine 34 directs the protein to the mitochondrion. Serine 14 carries the phosphoserine; by MTOR modification. Proline 46 is a Zn(2+) binding site. Cysteine 69 acts as the Cysteine persulfide intermediate in catalysis. Cysteine 69 carries the post-translational modification Cysteine persulfide. The Zn(2+) site is built by glycine 70, aspartate 71, cysteine 95, lysine 112, and cysteine 138. The active-site Cysteine persulfide intermediate is the cysteine 138. The residue at position 138 (cysteine 138) is a Cysteine persulfide.

Belongs to the NifU family. In terms of assembly, homodimer; Tyr-35-mediated dimerization of two iron- and sulfide-containing ISCU subunit bind to the cysteine desulfurase complex. Component of the mitochondrial core iron-sulfur cluster (ISC) complex composed of NFS1, LYRM4, NDUFAB1, ISCU, FXN, and FDX2; this complex is an heterohexamer containing two copies of each monomer. Interacts (D-state) with NFS1 (homodimer form); each monomer interacts with the C-terminal regions of each NFS1 monomer. Interacts (monomer form) with FXN (via ferrous form); the interaction is possible when both are bound to the dimeric form of the cysteine desulfurase complex (NFS1:LYRM4) and enhances FXN interaction to the dimeric form of the cysteine desulfurase complex (NFS1:LYRM4). Interacts with GLRX5. Interacts (D-state) with HSPA9. Interacts (S-state) with HSCB; this interaction stimulates the ATPase activity of HSPA9. Component of the cytoplasmic core iron-sulfur cluster (ISC) complex composed at least of NFS1, LYRM4, and ISCU; this complex interacts with FXN. Monomer; each monomer binds to the C-terminal regions of NFS1 (cytoplasmic and homodimer form). Interacts with NFS1 (cytoplasmic and homodimer form); this interaction promotes de novo iron-sulfur cluster formation. Interacts with HSCB (cytoplasmic form); this interaction stabilizes the (Fe-S) clusters on ISCU. In terms of processing, phosphorylation at Ser-14 is required for ISCU protein stabilization in the cytosol, whereas dephosphorylation of Ser-14, due to the inhibition of mTORC1 (mammalian target of rapamycin complex 1) complex, leads to degradation of the precursor form and ultimately to a decrease in the mitochondrial mature form. Post-translationally, cysteine persulfide is reduced by thiol-containing molecules such as glutathione and L-cysteine. As to expression, detected in heart, liver, skeletal muscle, brain, pancreas, kidney, lung and placenta.

Its subcellular location is the mitochondrion. It localises to the cytoplasm. It is found in the nucleus. Functionally, mitochondrial scaffold protein, of the core iron-sulfur cluster (ISC) assembly complex, that provides the structural architecture on which the [2Fe-2S] clusters are assembled. The core iron-sulfur cluster (ISC) assembly complex is involved in the de novo synthesis of a [2Fe-2S] cluster, the first step of the mitochondrial iron-sulfur protein biogenesis. This process is initiated by the cysteine desulfurase complex (NFS1:LYRM4:NDUFAB1) that produces persulfide which is delivered on the scaffold protein ISCU in a FXN-dependent manner. Then this complex is stabilized by FDX2 which provides reducing equivalents to accomplish the [2Fe-2S] cluster assembly. Finally, the [2Fe-2S] cluster is transferred from ISCU to chaperone proteins, including HSCB, HSPA9 and GLRX5. Exists as two slow interchanging conformational states, a structured (S) and disordered (D) form. May modulate NFS1 desulfurase activity in a zinc-dependent manner. Modulates the interaction between FXN and the cysteine desulfurase complex. Cytoplasmic scaffold protein, of the cytoplasmic core iron-sulfur cluster (ISC) assembly complex that provides the structural architecture on which the Fe-S clusters are assembled and may be involved in the cytoplasmic iron-sulfur protein biogenesis. This Homo sapiens (Human) protein is Iron-sulfur cluster assembly enzyme ISCU.